A 335-amino-acid polypeptide reads, in one-letter code: Leucine-rich repeat-containing protein 39 (335 aa).

Residues 10–47 (AVNAVKEVWEKRIKKLNEDLKREKEFQHKLVRIWEERV) are a coiled coil. 9 LRR repeats span residues 84 to 105 (QLQEWQLHRTGLLKIPEFIGRF), 107 to 128 (NLIVLDLSRNTISEIPPGIGLL), 130 to 151 (RLQELILSYNKIKTVPKELSNC), 153 to 176 (SLEKLELAVNRDICDLPQELSNLL), 177 to 197 (KLTHLDLSMNDFTTIPLAVLN), 200 to 221 (ALEWLDMGSNKLEQLPDTIERM), 223 to 244 (NLHTLWLQRNEITCLPQTISNM), 246 to 267 (NLGTLVLSNNKLQDIPVCMEEM), and 269 to 290 (NLRFVNFRDNPLKLKVSLPPSE).

In terms of assembly, interacts with MYH7 (via C-terminus). Highly expressed in skeletal muscle and heart. Not detected in other tissues tested.

The protein localises to the cytoplasm. It is found in the myofibril. Its subcellular location is the sarcomere. The protein resides in the m line. In terms of biological role, component of the sarcomeric M-band which plays a role in myocyte response to biomechanical stress. May regulate expression of other M-band proteins via an SRF-dependent pathway. Important for normal contractile function in heart. The sequence is that of Leucine-rich repeat-containing protein 39 (LRRC39) from Homo sapiens (Human).